Here is a 413-residue protein sequence, read N- to C-terminus: Arginine deiminase (413 aa).

Catalysis depends on C403, which acts as the Amidino-cysteine intermediate.

The protein belongs to the arginine deiminase family.

The protein localises to the cytoplasm. The enzyme catalyses L-arginine + H2O = L-citrulline + NH4(+). The protein operates within amino-acid degradation; L-arginine degradation via ADI pathway; carbamoyl phosphate from L-arginine: step 1/2. The protein is Arginine deiminase of Clostridium perfringens (strain SM101 / Type A).